A 173-amino-acid polypeptide reads, in one-letter code: Alpha-crystallin A chain (173 aa).

Residue Met1 is modified to N-acetylmethionine. The tract at residues 1–63 is required for complex formation with BFSP1 and BFSP2; it reads MDIAIQHPWF…RTVLDSGISE (63 aa). Gln6 is modified (deamidated glutamine; partial). Ser45 is modified (phosphoserine). Gln50 is modified (deamidated glutamine; partial). The sHSP domain maps to 52 to 162; that stretch reads LFRTVLDSGI…GHSERAIPVS (111 aa). An N6-acetyllysine mark is found at Lys70 and Lys99. His100 serves as a coordination point for Zn(2+). Asn101 bears the Deamidated asparagine; partial mark. Zn(2+) is bound by residues Glu102 and His107. The residue at position 122 (Ser122) is a Phosphoserine. Asn123 bears the Deamidated asparagine; partial mark. The disordered stretch occupies residues 144-173; it reads PKVPSGMDAGHSERAIPVSREEKPSSAPSS. The span at 153–167 shows a compositional bias: basic and acidic residues; sequence GHSERAIPVSREEKP. His154 contributes to the Zn(2+) binding site. An O-linked (GlcNAc) serine glycan is attached at Ser162.

Belongs to the small heat shock protein (HSP20) family. In terms of assembly, heteromer composed of three CRYAA and one CRYAB subunits. Inter-subunit bridging via zinc ions enhances stability, which is crucial as there is no protein turn over in the lens. Can also form homodimers and homotetramers (dimers of dimers) which serve as the building blocks of homooligomers. Within homooligomers, the zinc-binding motif is created from residues of 3 different molecules. His-100 and Glu-102 from one molecule are ligands of the zinc ion, and His-107 and His-154 residues from additional molecules complete the site with tetrahedral coordination geometry. Part of a complex required for lens intermediate filament formation composed of BFSP1, BFSP2 and CRYAA. Post-translationally, acetylation at Lys-70 may increase chaperone activity. Undergoes age-dependent proteolytical cleavage at the C-terminus.

The protein localises to the cytoplasm. Its subcellular location is the nucleus. Its function is as follows. Contributes to the transparency and refractive index of the lens. Acts as a chaperone, preventing aggregation of various proteins under a wide range of stress conditions. Required for the correct formation of lens intermediate filaments as part of a complex composed of BFSP1, BFSP2 and CRYAA. The sequence is that of Alpha-crystallin A chain (CRYAA) from Melursus ursinus (Sloth bear).